The following is a 421-amino-acid chain: D-amino acid dehydrogenase (421 aa).

Residue 3–17 (VLVLGGGVVGVASAY) coordinates FAD.

Belongs to the DadA oxidoreductase family. Requires FAD as cofactor.

It catalyses the reaction a D-alpha-amino acid + A + H2O = a 2-oxocarboxylate + AH2 + NH4(+). It functions in the pathway amino-acid degradation; D-alanine degradation; NH(3) and pyruvate from D-alanine: step 1/1. In terms of biological role, oxidative deamination of D-amino acids. The chain is D-amino acid dehydrogenase from Methylobacterium nodulans (strain LMG 21967 / CNCM I-2342 / ORS 2060).